We begin with the raw amino-acid sequence, 223 residues long: Killer cell lectin-like receptor subfamily B member 1B allele B (223 aa).

Residues 1 to 45 (MDTAVVYADLHLARTGEPKHKSPPSLSPDTCQCPRWHRLALKLGC) lie on the Cytoplasmic side of the membrane. The ITIM motif signature appears at 5 to 10 (VVYADL). An LCK-binding motif motif is present at residues 31-34 (CQCP). A helical; Signal-anchor for type II membrane protein membrane pass occupies residues 46–66 (ACLILLVLSVIGLGVLVLTLL). Over 67 to 223 (QKPLIQNSPA…LKCECMCNGS (157 aa)) the chain is Extracellular. One can recognise a C-type lectin domain in the interval 101-211 (HQDKCFHVSQ…CDSDNLWICQ (111 aa)). Disulfide bonds link cysteine 122/cysteine 210 and cysteine 189/cysteine 202.

As to quaternary structure, homodimer; disulfide-linked. Interacts with tyrosine kinase LCK. Binds PTPN6/SHP-1 in a phosphorylation-dependent manner. As to expression, expressed in a subset of natural killer cells.

Its subcellular location is the membrane. Receptor for CLEC2D/OCIL. Ligand-binding contributes to inhibition of cytotoxic natural killer (NK) cells. May mediate MHC class I-independent 'missing-self' recognition of allografts, tumor cells and virus-infected cells. In Rattus norvegicus (Rat), this protein is Killer cell lectin-like receptor subfamily B member 1B allele B.